The chain runs to 547 residues: Chaperonin GroEL (547 aa).

Residues 30-33 (TLGP), lysine 51, 87-91 (DGTTT), glycine 415, and aspartate 495 each bind ATP.

Belongs to the chaperonin (HSP60) family. Forms a cylinder of 14 subunits composed of two heptameric rings stacked back-to-back. Interacts with the co-chaperonin GroES.

Its subcellular location is the cytoplasm. The enzyme catalyses ATP + H2O + a folded polypeptide = ADP + phosphate + an unfolded polypeptide.. Functionally, together with its co-chaperonin GroES, plays an essential role in assisting protein folding. The GroEL-GroES system forms a nano-cage that allows encapsulation of the non-native substrate proteins and provides a physical environment optimized to promote and accelerate protein folding. In Allorhizobium ampelinum (strain ATCC BAA-846 / DSM 112012 / S4) (Agrobacterium vitis (strain S4)), this protein is Chaperonin GroEL.